Here is a 319-residue protein sequence, read N- to C-terminus: Protein-methionine methyltransferase laeA (319 aa).

Residues 269 to 293 are disordered; sequence REPQSGTCSVQRENGANGDRSTLSA. Positions 270–293 are enriched in polar residues; the sequence is EPQSGTCSVQRENGANGDRSTLSA.

It belongs to the methyltransferase superfamily. LaeA methyltransferase family. Component of the heterotrimeric velvet complex composed of laeA, veA and velB; VeA acting as a bridging protein between laeA and velB.

The protein resides in the nucleus. It carries out the reaction L-methionyl-[protein] + S-adenosyl-L-methionine = S-methyl-L-methionyl-[protein] + S-adenosyl-L-homocysteine. Methyltransferase; component of the velvet transcription factor complex that acts as a global regulator for secondary metabolite gene expression. Controls the expression of the chaetoglobosin A biosynthesis cluster via the cheR transcription factor and the subsequent production of chaetoglobosin A. Positively regulates the expression of smtA and negatively regulates the expression of velB. LaeA also regulates pigmentation and spores production. In Chaetomium globosum (strain ATCC 6205 / CBS 148.51 / DSM 1962 / NBRC 6347 / NRRL 1970) (Soil fungus), this protein is Protein-methionine methyltransferase laeA.